We begin with the raw amino-acid sequence, 768 residues long: cGMP-dependent protein kinase, isozyme 1 (768 aa).

The segment at 1-192 (MAAGMLTDRE…NDFLKNIDAS (192 aa)) is regulatory. Low complexity predominate over residues 114 to 127 (PLASTSSASPSGRT). A disordered region spans residues 114 to 134 (PLASTSSASPSGRTSADEVRP). 3',5'-cyclic GMP-binding positions include 249 to 252 (GELA), 259 to 260 (RT), R366, 375 to 378 (GEQA), 385 to 386 (RT), and Y421. In terms of domain architecture, Protein kinase spans 457 to 717 (LEVVSTLGIG…IQDIKKHKWF (261 aa)). ATP is bound by residues 463–471 (LGIGGFGRV) and K488. The Proton acceptor role is filled by D582. One can recognise an AGC-kinase C-terminal domain in the interval 718–768 (LGFDWDGLASQLLIPPFVRPIAHPTDVRYFDRFPCDLNEPPDELSGWDADF).

Belongs to the protein kinase superfamily. AGC Ser/Thr protein kinase family. cGMP subfamily. In terms of assembly, homodimer. Mg(2+) serves as cofactor. Post-translationally, autophosphorylated. As to expression, in embryo stage 13, expression is seen in a few large, irregular cells having the appearance of hemocytes or macrophages. In adults, expression is seen in optic lamina and weakly in testis.

It catalyses the reaction L-seryl-[protein] + ATP = O-phospho-L-seryl-[protein] + ADP + H(+). It carries out the reaction L-threonyl-[protein] + ATP = O-phospho-L-threonyl-[protein] + ADP + H(+). With respect to regulation, binding of cGMP results in enzyme activation. In Drosophila melanogaster (Fruit fly), this protein is cGMP-dependent protein kinase, isozyme 1 (Pkg21D).